The sequence spans 131 residues: Fumarate reductase subunit C (131 aa).

3 helical membrane passes run 30 to 50, 63 to 83, and 109 to 129; these read EGTAVPAVWFSIELIFGLFAL, FLQNPVIVIINLITLAAALLH, and IIKSLWAVTVVATIVILFVAL.

Belongs to the FrdC family. As to quaternary structure, part of an enzyme complex containing four subunits: a flavoprotein (FrdA), an iron-sulfur protein (FrdB), and two hydrophobic anchor proteins (FrdC and FrdD).

It localises to the cell inner membrane. Two distinct, membrane-bound, FAD-containing enzymes are responsible for the catalysis of fumarate and succinate interconversion; fumarate reductase is used in anaerobic growth, and succinate dehydrogenase is used in aerobic growth. Anchors the catalytic components of the fumarate reductase complex to the cell inner membrane, binds quinones. The chain is Fumarate reductase subunit C from Shigella boydii serotype 4 (strain Sb227).